A 463-amino-acid chain; its full sequence is Chaperone SurA (463 aa).

The N-terminal stretch at 1 to 25 (MTKPFSVVLASLLAITSTISPLASA) is a signal peptide. PpiC domains are found at residues 174 to 276 (GSKY…KLME) and 289 to 388 (VTEY…QRVG). Disordered stretches follow at residues 329 to 348 (ATAK…GDLG) and 434 to 463 (GDRA…KPTR). The segment covering 439–452 (NNATAAPAKSADPA) has biased composition (low complexity). The span at 453–463 (LPAPPPAKPTR) shows a compositional bias: pro residues.

It localises to the periplasm. It carries out the reaction [protein]-peptidylproline (omega=180) = [protein]-peptidylproline (omega=0). Functionally, chaperone involved in the correct folding and assembly of outer membrane proteins. Recognizes specific patterns of aromatic residues and the orientation of their side chains, which are found more frequently in integral outer membrane proteins. May act in both early periplasmic and late outer membrane-associated steps of protein maturation. This Xanthomonas oryzae pv. oryzae (strain KACC10331 / KXO85) protein is Chaperone SurA.